Consider the following 32-residue polypeptide: Cruzioseptin-9 (32 aa).

Glutamine amide is present on Q29. Positions 31-32 (EQ) are excised as a propeptide.

As to expression, expressed by the skin glands.

It localises to the secreted. In terms of biological role, has antimicrobial activity. This Cruziohyla calcarifer (Splendid leaf frog) protein is Cruzioseptin-9.